The primary structure comprises 201 residues: LexA repressor (201 aa).

Residues 27–47 constitute a DNA-binding region (H-T-H motif); it reads RMEISSAFGFASPNAAEDHLK. Active-site for autocatalytic cleavage activity residues include S116 and K153.

Belongs to the peptidase S24 family. In terms of assembly, homodimer.

The catalysed reaction is Hydrolysis of Ala-|-Gly bond in repressor LexA.. Represses a number of genes involved in the response to DNA damage (SOS response), including recA and lexA. In the presence of single-stranded DNA, RecA interacts with LexA causing an autocatalytic cleavage which disrupts the DNA-binding part of LexA, leading to derepression of the SOS regulon and eventually DNA repair. In Dechloromonas aromatica (strain RCB), this protein is LexA repressor.